The chain runs to 307 residues: Alpha N-terminal protein methyltransferase 1 (307 aa).

A compositionally biased stretch (low complexity) spans 38-54 (EPAPAPAAGSNGVAGEQ). A disordered region spans residues 38–60 (EPAPAPAAGSNGVAGEQEAGGGG). Residues G123, R128, 145–147 (EPV), 179–180 (LQ), and Q195 contribute to the S-adenosyl-L-methionine site.

Belongs to the methyltransferase superfamily. NTM1 family.

The catalysed reaction is N-terminal L-alanyl-L-prolyl-L-lysyl-[protein] + 3 S-adenosyl-L-methionine = N-terminal N,N,N-trimethyl-L-alanyl-L-prolyl-L-lysyl-[protein] + 3 S-adenosyl-L-homocysteine + 3 H(+). It carries out the reaction N-terminal L-seryl-L-prolyl-L-lysyl-[protein] + 3 S-adenosyl-L-methionine = N-terminal N,N,N-trimethyl-L-seryl-L-prolyl-L-lysyl-[protein] + 3 S-adenosyl-L-homocysteine + 3 H(+). The enzyme catalyses N-terminal L-prolyl-L-prolyl-L-lysyl-[protein] + 2 S-adenosyl-L-methionine = N-terminal N,N-dimethyl-L-prolyl-L-prolyl-L-lysyl-[protein] + 2 S-adenosyl-L-homocysteine + 2 H(+). Alpha-N-methyltransferase that methylates the N-terminus of target proteins containing the N-terminal motif [Ala/Pro/Ser]-Pro-Lys when the initiator Met is cleaved. Specifically catalyzes mono-, di- or tri-methylation of exposed alpha-amino group of Ala or Ser residue in the [Ala/Ser]-Pro-Lys motif and mono- or di-methylation of Pro in the Pro-Pro-Lys motif. The protein is Alpha N-terminal protein methyltransferase 1 of Oryza sativa subsp. indica (Rice).